A 168-amino-acid polypeptide reads, in one-letter code: Histone doublet miniH2B-H2A (168 aa).

Its subcellular location is the host nucleus. The protein localises to the host cytoplasm. It localises to the virion. Its function is as follows. Histone-like protein that is recruited to viral factories during viral replication and participates in viral DNA packaging and virion production probably by forming unstable nucleosome-like particles. May compact the viral DNA. The polypeptide is Histone doublet miniH2B-H2A (Melbournevirus (MelV)).